Reading from the N-terminus, the 362-residue chain is Histidinol-phosphate aminotransferase (362 aa).

Lys-218 carries the N6-(pyridoxal phosphate)lysine modification.

This sequence belongs to the class-II pyridoxal-phosphate-dependent aminotransferase family. Histidinol-phosphate aminotransferase subfamily. Homodimer. It depends on pyridoxal 5'-phosphate as a cofactor.

It carries out the reaction L-histidinol phosphate + 2-oxoglutarate = 3-(imidazol-4-yl)-2-oxopropyl phosphate + L-glutamate. The protein operates within amino-acid biosynthesis; L-histidine biosynthesis; L-histidine from 5-phospho-alpha-D-ribose 1-diphosphate: step 7/9. In Ruegeria sp. (strain TM1040) (Silicibacter sp.), this protein is Histidinol-phosphate aminotransferase.